Consider the following 296-residue polypeptide: Nucleotide-binding protein SPCG_1551 (296 aa).

13–20 serves as a coordination point for ATP; it reads GMSGAGKT. 63-66 is a binding site for GTP; sequence DMRS.

Belongs to the RapZ-like family.

Displays ATPase and GTPase activities. This Streptococcus pneumoniae (strain CGSP14) protein is Nucleotide-binding protein SPCG_1551.